We begin with the raw amino-acid sequence, 433 residues long: Glutamate-1-semialdehyde 2,1-aminomutase (433 aa).

The residue at position 270 (K270) is an N6-(pyridoxal phosphate)lysine.

This sequence belongs to the class-III pyridoxal-phosphate-dependent aminotransferase family. HemL subfamily. As to quaternary structure, homodimer. Requires pyridoxal 5'-phosphate as cofactor.

It localises to the cytoplasm. The enzyme catalyses (S)-4-amino-5-oxopentanoate = 5-aminolevulinate. It functions in the pathway porphyrin-containing compound metabolism; protoporphyrin-IX biosynthesis; 5-aminolevulinate from L-glutamyl-tRNA(Glu): step 2/2. The chain is Glutamate-1-semialdehyde 2,1-aminomutase from Symbiobacterium thermophilum (strain DSM 24528 / JCM 14929 / IAM 14863 / T).